Consider the following 72-residue polypeptide: MDMKLLAAGIAVLAGIGAGIGIGIATAGAIEATARQPEASDKIQSLFIMGAGLSEATAIYGLVISIILLFVV.

2 helical membrane-spanning segments follow: residues 5–25 and 52–72; these read LLAAGIAVLAGIGAGIGIGIA and GLSEATAIYGLVISIILLFVV.

The protein belongs to the ATPase C chain family. In terms of assembly, F-type ATPases have 2 components, F(1) - the catalytic core - and F(0) - the membrane proton channel. F(1) has five subunits: alpha(3), beta(3), gamma(1), delta(1), epsilon(1). F(0) has three main subunits: a(1), b(2) and c(10-14). The alpha and beta chains form an alternating ring which encloses part of the gamma chain. F(1) is attached to F(0) by a central stalk formed by the gamma and epsilon chains, while a peripheral stalk is formed by the delta and b chains.

Its subcellular location is the cell membrane. Functionally, f(1)F(0) ATP synthase produces ATP from ADP in the presence of a proton or sodium gradient. F-type ATPases consist of two structural domains, F(1) containing the extramembraneous catalytic core and F(0) containing the membrane proton channel, linked together by a central stalk and a peripheral stalk. During catalysis, ATP synthesis in the catalytic domain of F(1) is coupled via a rotary mechanism of the central stalk subunits to proton translocation. Key component of the F(0) channel; it plays a direct role in translocation across the membrane. A homomeric c-ring of between 10-14 subunits forms the central stalk rotor element with the F(1) delta and epsilon subunits. The protein is ATP synthase subunit c of Clostridium perfringens (strain SM101 / Type A).